Here is a 246-residue protein sequence, read N- to C-terminus: Polyhedrin (246 aa).

This sequence belongs to the polyhedrin family.

Major component of the virus occlusion bodies, which are large proteinaceous structures (polyhedra), that protect the virus from the outside environment for extended periods until they are ingested by insect larvae. This is Polyhedrin (PH) from Lepidoptera (butterflies and moths).